Consider the following 101-residue polypeptide: Urease subunit beta (101 aa).

Belongs to the urease beta subunit family. In terms of assembly, heterotrimer of UreA (gamma), UreB (beta) and UreC (alpha) subunits. Three heterotrimers associate to form the active enzyme.

Its subcellular location is the cytoplasm. The enzyme catalyses urea + 2 H2O + H(+) = hydrogencarbonate + 2 NH4(+). Its pathway is nitrogen metabolism; urea degradation; CO(2) and NH(3) from urea (urease route): step 1/1. The polypeptide is Urease subunit beta (Pseudomonas fluorescens (strain ATCC BAA-477 / NRRL B-23932 / Pf-5)).